The chain runs to 874 residues: Alanine--tRNA ligase (874 aa).

Zn(2+) is bound by residues histidine 564, histidine 568, cysteine 665, and histidine 669.

This sequence belongs to the class-II aminoacyl-tRNA synthetase family. Requires Zn(2+) as cofactor.

It localises to the cytoplasm. It catalyses the reaction tRNA(Ala) + L-alanine + ATP = L-alanyl-tRNA(Ala) + AMP + diphosphate. In terms of biological role, catalyzes the attachment of alanine to tRNA(Ala) in a two-step reaction: alanine is first activated by ATP to form Ala-AMP and then transferred to the acceptor end of tRNA(Ala). Also edits incorrectly charged Ser-tRNA(Ala) and Gly-tRNA(Ala) via its editing domain. The protein is Alanine--tRNA ligase of Burkholderia orbicola (strain MC0-3).